The primary structure comprises 433 residues: Enolase (433 aa).

Residue Gln163 participates in (2R)-2-phosphoglycerate binding. Glu205 (proton donor) is an active-site residue. Mg(2+)-binding residues include Asp242, Glu286, and Asp313. (2R)-2-phosphoglycerate is bound by residues Lys338, Arg367, Ser368, and Lys389. Lys338 functions as the Proton acceptor in the catalytic mechanism.

It belongs to the enolase family. The cofactor is Mg(2+).

The protein localises to the cytoplasm. It localises to the secreted. Its subcellular location is the cell surface. It catalyses the reaction (2R)-2-phosphoglycerate = phosphoenolpyruvate + H2O. It participates in carbohydrate degradation; glycolysis; pyruvate from D-glyceraldehyde 3-phosphate: step 4/5. Catalyzes the reversible conversion of 2-phosphoglycerate (2-PG) into phosphoenolpyruvate (PEP). It is essential for the degradation of carbohydrates via glycolysis. The protein is Enolase of Koribacter versatilis (strain Ellin345).